A 102-amino-acid polypeptide reads, in one-letter code: RNA-binding protein Hfq (102 aa).

Residues 9-68 (DPFVNALRRERVPVSIYLVNGIKLQGQIESFDQFVILLKNTVSQMVYKHAISTVVPSRPV) form the Sm domain. Positions 63–102 (VPSRPVSHHSNNAGGGASNNYHHGSNAQGSTAQQDSEETE) are disordered. Over residues 70-88 (HHSNNAGGGASNNYHHGSN) the composition is skewed to low complexity.

It belongs to the Hfq family. As to quaternary structure, homohexamer.

Its function is as follows. RNA chaperone that binds small regulatory RNA (sRNAs) and mRNAs to facilitate mRNA translational regulation in response to envelope stress, environmental stress and changes in metabolite concentrations. Also binds with high specificity to tRNAs. The protein is RNA-binding protein Hfq of Salmonella heidelberg (strain SL476).